A 633-amino-acid chain; its full sequence is Chaperone protein HtpG (633 aa).

The tract at residues 1–344 (MSLQPQAETL…SNDLPLNISR (344 aa)) is a; substrate-binding. Positions 345-560 (ELLQSNEVIN…ENEMSGHLQR (216 aa)) are b. A c region spans residues 561 to 633 (LLIQTGQDFM…KGLNELLLDS (73 aa)).

Belongs to the heat shock protein 90 family. In terms of assembly, homodimer.

Its subcellular location is the cytoplasm. Molecular chaperone. Has ATPase activity. The sequence is that of Chaperone protein HtpG from Coxiella burnetii (strain RSA 493 / Nine Mile phase I).